We begin with the raw amino-acid sequence, 267 residues long: MVVVAAAPSAASAAPKVLLLSGQPASGGRALPLMVPGPRAAGSEASGTPQARKRQRLTHLSPEEKALRRKLKNRVAAQTARDRKKARMSELEQQVVDLEEENQKLQLENQLLREKTHGLVIENQELRTRLGMNALVTEEVSEAESKGNGVRLVAGSAESAALRLRAPLQQVQAQLSPPQNIFPWILTLLPLQILSLISFWAFWTSWTLSCFSNVLPQSLLIWRNSQRSTQKDLVPYQPPFLCQWGPHQPSWKPLMNSFVLTMYTPSL.

At 1 to 180 the chain is on the cytoplasmic side; the sequence is MVVVAAAPSA…VQAQLSPPQN (180 aa). A disordered region spans residues 35–60; it reads VPGPRAAGSEASGTPQARKRQRLTHL. A Phosphoserine modification is found at Ser61. Residues 63 to 126 form the bZIP domain; sequence EEKALRRKLK…HGLVIENQEL (64 aa). Residues 65-87 are basic motif; it reads KALRRKLKNRVAAQTARDRKKAR. Positions 69-85 are nuclear localization signal (NLS); sequence RKLKNRVAAQTARDRKK. A leucine-zipper region spans residues 91–126; the sequence is LEQQVVDLEEENQKLQLENQLLREKTHGLVIENQEL. Residues 181-198 traverse the membrane as a helical; Signal-anchor for type II membrane protein segment; sequence IFPWILTLLPLQILSLIS. The Lumenal portion of the chain corresponds to 199–267; the sequence is FWAFWTSWTL…FVLTMYTPSL (69 aa).

The protein belongs to the bZIP family. As to quaternary structure, isoform 1 interacts with HM13. Isoform 1 interacts with RNF139; the interaction induces ubiquitination and degradation of isoform 1. Isoform 1 interacts (via luminal domain) with DERL1; the interaction obviates the need for ectodomain shedding prior HM13/SPP-mediated XBP1 isoform 1 cleavage. Isoform 1 interacts with HDAC3 and AKT1; the interactions occur in endothelial cell (EC) under disturbed flow. Isoform 1 interacts with the oncoprotein FOS. Interacts with SIRT1. Post-translationally, isoform 1 is ubiquitinated, leading to proteasome-mediated degradation in response to ER stress. In terms of processing, X-box-binding protein 1, cytoplasmic form and luminal form are produced by intramembrane proteolytic cleavage of ER membrane-anchored isoform 1 triggered by HM13/SPP in a DERL1-RNF139-dependent and VCP/p97-independent manner. X-box-binding protein 1, luminal form is ubiquitinated leading to proteasomal degradation. Acetylated by EP300; acetylation positively regulates the transcriptional activity of XBP1. Deacetylated by SIRT1; deacetylation negatively regulates the transcriptional activity of XBP1.

The protein localises to the nucleus. It localises to the endoplasmic reticulum. It is found in the cytoplasm. The protein resides in the endoplasmic reticulum membrane. Its subcellular location is the membrane. In terms of biological role, functions as a transcription factor during endoplasmic reticulum (ER) stress by regulating the unfolded protein response (UPR). Required for cardiac myogenesis and hepatogenesis during embryonic development, and the development of secretory tissues such as exocrine pancreas and salivary gland. Involved in terminal differentiation of B lymphocytes to plasma cells and production of immunoglobulins. Modulates the cellular response to ER stress in a PIK3R-dependent manner. Binds to the cis-acting X box present in the promoter regions of major histocompatibility complex class II genes. Involved in VEGF-induced endothelial cell (EC) proliferation and retinal blood vessel formation during embryonic development but also for angiogenesis in adult tissues under ischemic conditions. Functions also as a major regulator of the UPR in obesity-induced insulin resistance and type 2 diabetes for the management of obesity and diabetes prevention. Its function is as follows. Acts as a weak transcriptional factor. Together with HDAC3, contributes to the activation of NFE2L2-mediated HMOX1 transcription factor gene expression in a PI(3)K/mTORC2/Akt-dependent signaling pathway leading to EC survival under disturbed flow/oxidative stress. Binds to the ER stress response element (ERSE) upon ER stress. Binds to the consensus 5'-GATGACGTG[TG]N(3)[AT]T-3' sequence related to cAMP responsive element (CRE)-like sequences. Associates preferentially to the HDAC3 gene promoter region in a static flow-dependent manner. Binds to the CDH5/VE-cadherin gene promoter region. The sequence is that of X-box-binding protein 1 from Rattus norvegicus (Rat).